A 450-amino-acid chain; its full sequence is MLSILWNLAAFIIALGVLITVHEFGHFWVARRCGVRVERFSIGFGKALWRRTDRYGTEYVIALIPLGGYVKMLDERAEPVAPELRRHAFNNKTVGQRAAIIAAGPVANFIFAIFAYWLVFIIGVPGVRPVIGEITPNSIAAQAQIAPGTELKAVDGIETPDWDAVRLQLVSKIGDQQTTVSVAPFGSDQRQDKTLDLRHWAFEPDKQDPVSSLGIRPRGPQIEPVLSEVQANSAASKAGLQAGDRIVKVDGQPLTQWMKFVTFVRDNPGKPLALEIERQGSALSLTLTPDTKSVNGKAEGFAGVVPKIIPLPEEYKTIRQYGPFSAILEATDKTWQLMKLTVNMLGKLITGDVKLNNLSGPISIAQGAGMSAEFGVIYYLMFLALISVNLGIINLFPLPVLDGGHLLFLAIEKLKGGPVSERVQDFSYRIGSILLVLLMGLALFNDFSRL.

Histidine 22 is a Zn(2+) binding site. Residue glutamate 23 is part of the active site. Histidine 26 serves as a coordination point for Zn(2+). The helical transmembrane segment at 98-120 (AAIIAAGPVANFIFAIFAYWLVF) threads the bilayer. PDZ domains are found at residues 115-186 (AYWL…APFG) and 199-291 (HWAF…TPDT). The next 2 helical transmembrane spans lie at 376-398 (VIYY…LFPL) and 426-445 (FSYR…ALFN).

The protein belongs to the peptidase M50B family. In terms of assembly, interacts with RseA. It depends on Zn(2+) as a cofactor.

The protein localises to the cell inner membrane. A site-2 regulated intramembrane protease (S2P) that cleaves the peptide bond between 'Ala-108' and 'Cys-109' in the transmembrane region of RseA. Part of a regulated intramembrane proteolysis (RIP) cascade. Acts on DegS-cleaved RseA to release the cytoplasmic domain of RseA. This provides the cell with sigma-E (RpoE) activity through the proteolysis of RseA. This Salmonella typhi protein is Regulator of sigma E protease (rseP).